The sequence spans 1144 residues: Nitric oxide synthase, inducible (1144 aa).

Positions 23–27 (DINNN) match the DINNN-motif; mediates interaction with SPSB1, SPSB2 and SPSB4 motif. The segment at 37-59 (SPTIQDDPKSHQNGSPQLLTGTA) is disordered. The span at 47 to 59 (HQNGSPQLLTGTA) shows a compositional bias: polar residues. Zn(2+) contacts are provided by cysteine 104 and cysteine 109. Serine 112 is a binding site for (6R)-L-erythro-5,6,7,8-tetrahydrobiopterin. Heme b is bound at residue cysteine 194. L-arginine-binding residues include glutamine 257, tryptophan 366, tyrosine 367, and glutamate 371. (6R)-L-erythro-5,6,7,8-tetrahydrobiopterin-binding residues include arginine 375, isoleucine 456, tryptophan 457, and phenylalanine 470. Tyrosine 485 contacts heme b. The calmodulin-binding stretch occupies residues 509–529 (FRVLVKVVFFASMLMRKVMAS). One can recognise a Flavodoxin-like domain in the interval 533–671 (ATVLFATETG…AFRSWAVQTF (139 aa)). Threonine 539, glutamate 540, threonine 541, lysine 543, and serine 544 together coordinate FMN. Phosphotyrosine is present on tyrosine 569. Positions 585, 586, 622, 629, 655, and 659 each coordinate FMN. The FAD-binding FR-type domain occupies 724-964 (KNVFTMRLKS…VRSVSGFQLP (241 aa)). Arginine 744 lines the NADP(+) pocket. Residues histidine 766, arginine 900, tyrosine 902, serine 903, threonine 918, and alanine 920 each contribute to the FAD site. An NADP(+)-binding site is contributed by threonine 923. 4 residues coordinate FAD: tyrosine 924, valine 937, cysteine 938, and serine 939. The NADP(+) site is built by threonine 978, arginine 1011, serine 1040, arginine 1041, lysine 1047, tyrosine 1049, glutamine 1051, and aspartate 1084.

The protein belongs to the NOS family. In terms of assembly, homodimer. Interacts with NHERF1. Interacts with GAPDH. Interacts with S100A8 and S100A9 to form the iNOS-S100A8/9 transnitrosylase complex. Interacts with SPSB1, SPSB2 and SPSB4. Interacts with ELOC and CUL5 in the presence of SPSB1 or SPSB2 or SPSB4. Forms a complex with ASL, ASS1 and HSP90AA1; the complex regulates cell-autonomous L-arginine synthesis and citrulline recycling while channeling extracellular L-arginine to nitric oxide synthesis pathway. Heme b is required as a cofactor. It depends on FAD as a cofactor. The cofactor is FMN. Requires (6R)-L-erythro-5,6,7,8-tetrahydrobiopterin as cofactor. In terms of processing, polyubiquitinated; mediated by SPSB1, SPSB2 and SPSB4, leading to proteasomal degradation. As to expression, macrophages.

The protein localises to the cytoplasm. Its subcellular location is the cytosol. The catalysed reaction is 2 L-arginine + 3 NADPH + 4 O2 + H(+) = 2 L-citrulline + 2 nitric oxide + 3 NADP(+) + 4 H2O. With respect to regulation, not stimulated by calcium/calmodulin. Aspirin inhibits expression and function of this enzyme and effects may be exerted at the level of translational/post-translational modification and directly on the catalytic activity. Functionally, produces nitric oxide (NO) which is a messenger molecule with diverse functions throughout the body. In macrophages, NO mediates tumoricidal and bactericidal actions. Also has nitrosylase activity and mediates cysteine S-nitrosylation of cytoplasmic target proteins such PTGS2/COX2. As component of the iNOS-S100A8/9 transnitrosylase complex involved in the selective inflammatory stimulus-dependent S-nitrosylation of GAPDH implicated in regulation of the GAIT complex activity and probably multiple targets including ANXA5, EZR, MSN and VIM. Involved in inflammation, enhances the synthesis of pro-inflammatory mediators such as IL6 and IL8. This Mus musculus (Mouse) protein is Nitric oxide synthase, inducible (Nos2).